Here is a 252-residue protein sequence, read N- to C-terminus: D-aminoacyl-tRNA deacylase (252 aa).

The protein belongs to the DtdA deacylase family. Monomer. The cofactor is Zn(2+).

It catalyses the reaction a D-aminoacyl-tRNA + H2O = a tRNA + a D-alpha-amino acid + H(+). The catalysed reaction is glycyl-tRNA(Ala) + H2O = tRNA(Ala) + glycine + H(+). D-aminoacyl-tRNA deacylase with broad substrate specificity. By recycling D-aminoacyl-tRNA to D-amino acids and free tRNA molecules, this enzyme counteracts the toxicity associated with the formation of D-aminoacyl-tRNA entities in vivo. This is D-aminoacyl-tRNA deacylase from Pyrobaculum arsenaticum (strain DSM 13514 / JCM 11321 / PZ6).